Consider the following 388-residue polypeptide: Chorismate synthase (388 aa).

NADP(+) is bound by residues Arg-39 and Arg-45. FMN-binding positions include 130 to 132 (RSS), 251 to 252 (NA), Gly-296, 311 to 315 (KPIPT), and Arg-337.

It belongs to the chorismate synthase family. Homotetramer. The cofactor is FMNH2.

It catalyses the reaction 5-O-(1-carboxyvinyl)-3-phosphoshikimate = chorismate + phosphate. It functions in the pathway metabolic intermediate biosynthesis; chorismate biosynthesis; chorismate from D-erythrose 4-phosphate and phosphoenolpyruvate: step 7/7. Its function is as follows. Catalyzes the anti-1,4-elimination of the C-3 phosphate and the C-6 proR hydrogen from 5-enolpyruvylshikimate-3-phosphate (EPSP) to yield chorismate, which is the branch point compound that serves as the starting substrate for the three terminal pathways of aromatic amino acid biosynthesis. This reaction introduces a second double bond into the aromatic ring system. The sequence is that of Chorismate synthase from Geobacillus thermodenitrificans (strain NG80-2).